A 249-amino-acid chain; its full sequence is Acetylglutamate kinase (249 aa).

Substrate-binding positions include 36-37, R58, and N147; that span reads GG.

Belongs to the acetylglutamate kinase family. ArgB subfamily.

The protein localises to the cytoplasm. The catalysed reaction is N-acetyl-L-glutamate + ATP = N-acetyl-L-glutamyl 5-phosphate + ADP. Its pathway is amino-acid biosynthesis; L-arginine biosynthesis; N(2)-acetyl-L-ornithine from L-glutamate: step 2/4. Functionally, catalyzes the ATP-dependent phosphorylation of N-acetyl-L-glutamate. The chain is Acetylglutamate kinase from Thermus thermophilus (strain ATCC 27634 / DSM 579 / HB8).